The chain runs to 300 residues: Bifunctional protein FolD 2 (300 aa).

NADP(+) is bound by residues 165–167 (GRS), Ser-190, and Ile-231.

This sequence belongs to the tetrahydrofolate dehydrogenase/cyclohydrolase family. In terms of assembly, homodimer.

The enzyme catalyses (6R)-5,10-methylene-5,6,7,8-tetrahydrofolate + NADP(+) = (6R)-5,10-methenyltetrahydrofolate + NADPH. The catalysed reaction is (6R)-5,10-methenyltetrahydrofolate + H2O = (6R)-10-formyltetrahydrofolate + H(+). The protein operates within one-carbon metabolism; tetrahydrofolate interconversion. Its function is as follows. Catalyzes the oxidation of 5,10-methylenetetrahydrofolate to 5,10-methenyltetrahydrofolate and then the hydrolysis of 5,10-methenyltetrahydrofolate to 10-formyltetrahydrofolate. This Pseudomonas syringae pv. tomato (strain ATCC BAA-871 / DC3000) protein is Bifunctional protein FolD 2.